A 346-amino-acid polypeptide reads, in one-letter code: Holliday junction branch migration complex subunit RuvB (346 aa).

The tract at residues 1–188 (MSDEYGPPER…FGIVQRLAYY (188 aa)) is large ATPase domain (RuvB-L). ATP-binding positions include Leu-27, Arg-28, Gly-69, Lys-72, Thr-73, Thr-74, 135 to 137 (EDF), Arg-178, Tyr-188, and Arg-225. Mg(2+) is bound at residue Thr-73. Positions 189 to 259 (PVDELTRIVQ…VAADAMELLD (71 aa)) are small ATPAse domain (RuvB-S). A head domain (RuvB-H) region spans residues 262–346 (RNGLDEQDRR…QAAGSGDLFG (85 aa)). DNA is bound by residues Arg-298, Arg-317, and Arg-322.

The protein belongs to the RuvB family. Homohexamer. Forms an RuvA(8)-RuvB(12)-Holliday junction (HJ) complex. HJ DNA is sandwiched between 2 RuvA tetramers; dsDNA enters through RuvA and exits via RuvB. An RuvB hexamer assembles on each DNA strand where it exits the tetramer. Each RuvB hexamer is contacted by two RuvA subunits (via domain III) on 2 adjacent RuvB subunits; this complex drives branch migration. In the full resolvosome a probable DNA-RuvA(4)-RuvB(12)-RuvC(2) complex forms which resolves the HJ.

It localises to the cytoplasm. It carries out the reaction ATP + H2O = ADP + phosphate + H(+). In terms of biological role, the RuvA-RuvB-RuvC complex processes Holliday junction (HJ) DNA during genetic recombination and DNA repair, while the RuvA-RuvB complex plays an important role in the rescue of blocked DNA replication forks via replication fork reversal (RFR). RuvA specifically binds to HJ cruciform DNA, conferring on it an open structure. The RuvB hexamer acts as an ATP-dependent pump, pulling dsDNA into and through the RuvAB complex. RuvB forms 2 homohexamers on either side of HJ DNA bound by 1 or 2 RuvA tetramers; 4 subunits per hexamer contact DNA at a time. Coordinated motions by a converter formed by DNA-disengaged RuvB subunits stimulates ATP hydrolysis and nucleotide exchange. Immobilization of the converter enables RuvB to convert the ATP-contained energy into a lever motion, pulling 2 nucleotides of DNA out of the RuvA tetramer per ATP hydrolyzed, thus driving DNA branch migration. The RuvB motors rotate together with the DNA substrate, which together with the progressing nucleotide cycle form the mechanistic basis for DNA recombination by continuous HJ branch migration. Branch migration allows RuvC to scan DNA until it finds its consensus sequence, where it cleaves and resolves cruciform DNA. This Halorhodospira halophila (strain DSM 244 / SL1) (Ectothiorhodospira halophila (strain DSM 244 / SL1)) protein is Holliday junction branch migration complex subunit RuvB.